The sequence spans 266 residues: HLA class II histocompatibility antigen, DR beta 4 chain (266 aa).

The first 29 residues, 1–29 (MVCLKLPGGSCMAALTVTLTVLSSPLALA), serve as a signal peptide directing secretion. The segment at 30 to 124 (GDTQPRFLEQ…VESFTVQRRV (95 aa)) is beta-1. Residues 30 to 227 (GDTQPRFLEQ…SARSESAQSK (198 aa)) are Extracellular-facing. Cystine bridges form between cysteine 44-cysteine 108 and cysteine 146-cysteine 202. Asparagine 48 carries an N-linked (GlcNAc...) asparagine glycan. A beta-2 region spans residues 125-227 (QPKVTVYPSK…SARSESAQSK (103 aa)). Residues 126–216 (PKVTVYPSKT…PSMMSPLTVQ (91 aa)) form the Ig-like C1-type domain. The chain crosses the membrane as a helical span at residues 228-250 (MLSGVGGFVLGLLFLGTGLFIYF). At 251–266 (RNQKGHSGLQPTGLLS) the chain is on the cytoplasmic side. Lysine 254 participates in a covalent cross-link: Glycyl lysine isopeptide (Lys-Gly) (interchain with G-Cter in ubiquitin).

The protein belongs to the MHC class II family. As to quaternary structure, heterodimer of an alpha and a beta subunit; also referred as MHC class II molecule. In the endoplasmic reticulum (ER) it forms a heterononamer; 3 MHC class II molecules bind to a CD74 homotrimer (also known as invariant chain or HLA class II histocompatibility antigen gamma chain). In the endosomal/lysosomal system; CD74 undergoes sequential degradation by various proteases; leaving a small fragment termed CLIP on each MHC class II molecule. MHC class II molecule interacts with HLA_DM, and HLA_DO in B-cells, in order to release CLIP and facilitate the binding of antigenic peptides. In terms of processing, ubiquitinated by MARCH1 and MARCH8 at Lys-254 leading to sorting into the endosome system and down-regulation of MHC class II. When associated with ubiquitination of the alpha subunit of HLA-DR: HLA-DRA 'Lys-244', the down-regulation of MHC class II may be highly effective.

It localises to the cell membrane. It is found in the endoplasmic reticulum membrane. The protein resides in the golgi apparatus. The protein localises to the trans-Golgi network membrane. Its subcellular location is the endosome membrane. It localises to the lysosome membrane. It is found in the late endosome membrane. In terms of biological role, binds peptides derived from antigens that access the endocytic route of antigen presenting cells (APC) and presents them on the cell surface for recognition by the CD4 T-cells. The peptide binding cleft accommodates peptides of 10-30 residues. The peptides presented by MHC class II molecules are generated mostly by degradation of proteins that access the endocytic route, where they are processed by lysosomal proteases and other hydrolases. Exogenous antigens that have been endocytosed by the APC are thus readily available for presentation via MHC II molecules, and for this reason this antigen presentation pathway is usually referred to as exogenous. As membrane proteins on their way to degradation in lysosomes as part of their normal turn-over are also contained in the endosomal/lysosomal compartments, exogenous antigens must compete with those derived from endogenous components. Autophagy is also a source of endogenous peptides, autophagosomes constitutively fuse with MHC class II loading compartments. In addition to APCs, other cells of the gastrointestinal tract, such as epithelial cells, express MHC class II molecules and CD74 and act as APCs, which is an unusual trait of the GI tract. To produce a MHC class II molecule that presents an antigen, three MHC class II molecules (heterodimers of an alpha and a beta chain) associate with a CD74 trimer in the ER to form a heterononamer. Soon after the entry of this complex into the endosomal/lysosomal system where antigen processing occurs, CD74 undergoes a sequential degradation by various proteases, including CTSS and CTSL, leaving a small fragment termed CLIP (class-II-associated invariant chain peptide). The removal of CLIP is facilitated by HLA-DM via direct binding to the alpha-beta-CLIP complex so that CLIP is released. HLA-DM stabilizes MHC class II molecules until primary high affinity antigenic peptides are bound. The MHC II molecule bound to a peptide is then transported to the cell membrane surface. In B-cells, the interaction between HLA-DM and MHC class II molecules is regulated by HLA-DO. Primary dendritic cells (DCs) also to express HLA-DO. Lysosomal microenvironment has been implicated in the regulation of antigen loading into MHC II molecules, increased acidification produces increased proteolysis and efficient peptide loading. The polypeptide is HLA class II histocompatibility antigen, DR beta 4 chain (HLA-DRB4) (Homo sapiens (Human)).